Here is a 190-residue protein sequence, read N- to C-terminus: Putative resolvase R80 (190 aa).

Residues 11–30 (SSVLGVHQRTLYQWDKKGWI) constitute a DNA-binding region (H-T-H motif). Residues 61–190 (LSICYVRVSS…RNGSRKYSNK (130 aa)) enclose the Resolvase/invertase-type recombinase catalytic domain. The stretch at 67–92 (RVSSNSQKDDLERQIKFMKKKYPNHT) forms a coiled coil. Catalysis depends on Ser69, which acts as the O-(5'-phospho-DNA)-serine intermediate.

It belongs to the site-specific recombinase resolvase family.

Its function is as follows. Resolvase catalyzes the resolution (a site-specific recombination) of the cointegrated replicon to yield the final transposition products. This is Putative resolvase R80 from Acanthamoeba polyphaga mimivirus (APMV).